Consider the following 381-residue polypeptide: Transcriptional regulatory protein FlgR (381 aa).

The region spanning 2–113 (KIAIVEDDIN…LLLESIYRTK (112 aa)) is the Response regulatory domain. D51 carries the 4-aspartylphosphate modification. The Sigma-54 factor interaction domain maps to 136 to 365 (FLAASKALEE…LLGVVERAAI (230 aa)). ATP is bound by residues 164–171 (GESGVGKE) and 227–236 (ANKGTIFLDE).

Phosphorylated by FlgS.

Functionally, member of the two-component regulatory system FlgR/FlgS that induces the transcriptional induction of the genes needed in motility and flagellar biogenesis. Upon phosphorylation by FlgS, functions as a transcriptional regulator and activates transcription of RpoN-dependent flagellar genes. This Helicobacter pylori (strain ATCC 700392 / 26695) (Campylobacter pylori) protein is Transcriptional regulatory protein FlgR (flgR).